Reading from the N-terminus, the 177-residue chain is Secretion monitor (177 aa).

Residues 1–30 (MIGILNRWRQFGRRYFWPHLLLGMVAASLG) form the signal peptide.

Belongs to the SecM family.

The protein resides in the cytoplasm. It localises to the cytosol. Its subcellular location is the periplasm. In terms of biological role, regulates secA expression by translational coupling of the secM secA operon. Translational pausing at a specific Pro residue 5 residues before the end of the protein may allow disruption of a mRNA repressor helix that normally suppresses secA translation initiation. The protein is Secretion monitor of Yersinia enterocolitica serotype O:8 / biotype 1B (strain NCTC 13174 / 8081).